A 437-amino-acid polypeptide reads, in one-letter code: UPF0597 protein Shal_0864 (437 aa).

This sequence belongs to the UPF0597 family.

This Shewanella halifaxensis (strain HAW-EB4) protein is UPF0597 protein Shal_0864.